Here is a 189-residue protein sequence, read N- to C-terminus: FAS1 domain-containing protein mug57 (189 aa).

The first 24 residues, 1–24 (MMKLFCLNIFRFLYTTSFISAVLS), serve as a signal peptide directing secretion. The region spanning 37-182 (EPRLFELLAE…GEMWVLNATL (146 aa)) is the FAS1 domain.

The protein resides in the cytoplasm. Its subcellular location is the nucleus. It localises to the membrane. Its function is as follows. Has a role in sporulation. This is FAS1 domain-containing protein mug57 (mug57) from Schizosaccharomyces pombe (strain 972 / ATCC 24843) (Fission yeast).